A 105-amino-acid chain; its full sequence is Large ribosomal subunit protein eL36 (105 aa).

The disordered stretch occupies residues 1–20; it reads MAKEAPAKTGLAVGLNKGHK.

The protein belongs to the eukaryotic ribosomal protein eL36 family.

This Trichoderma hamatum protein is Large ribosomal subunit protein eL36 (rpl36).